Consider the following 367-residue polypeptide: Serine/threonine-protein kinase Sgk2 (367 aa).

The tract at residues 1 to 28 (MASSPVGVPSPQPSRANGNINLGPSANP) is disordered. S10 is modified (phosphoserine). The span at 15-28 (RANGNINLGPSANP) shows a compositional bias: polar residues. The region spanning 35 to 292 (FDFLKVIGKG…FLDIKNHMFF (258 aa)) is the Protein kinase domain. Residues 41 to 49 (IGKGNYGKV) and K64 contribute to the ATP site. Residues 68 to 77 (KKSILKNKEQ) carry the Nuclear localization signal motif. Catalysis depends on D159, which acts as the Proton acceptor. T193 carries the post-translational modification Phosphothreonine; by PDPK1. In terms of domain architecture, AGC-kinase C-terminal spans 293-367 (SPINWDDLYH…AQDDDDILDS (75 aa)). Phosphoserine occurs at positions 334 and 356. Position 357 is a phosphotyrosine (Y357).

The protein belongs to the protein kinase superfamily. AGC Ser/Thr protein kinase family. Post-translationally, activated by phosphorylation on Ser-356 by an unknown kinase (may be mTORC2 but not confirmed), transforming it into a substrate for PDPK1 which then phosphorylates it on Thr-193. As to expression, expressed in the proximal tubule and thick ascending limb of the loop of Henle (TALH).

It localises to the cytoplasm. Its subcellular location is the nucleus. It catalyses the reaction L-seryl-[protein] + ATP = O-phospho-L-seryl-[protein] + ADP + H(+). The catalysed reaction is L-threonyl-[protein] + ATP = O-phospho-L-threonyl-[protein] + ADP + H(+). With respect to regulation, two specific sites, one in the kinase domain (Thr-193) and the other in the C-terminal regulatory region (Ser-356), need to be phosphorylated for its full activation. Serine/threonine-protein kinase which is involved in the regulation of a wide variety of ion channels, membrane transporters, cell growth, survival and proliferation. Up-regulates Na(+) channels: SCNN1A/ENAC, K(+) channels: KCNA3/Kv1.3, KCNE1 and KCNQ1, amino acid transporter: SLC6A19, glutamate transporter: SLC1A6/EAAT4, glutamate receptors: GRIA1/GLUR1 and GRIK2/GLUR6, Na(+)/H(+) exchanger: SLC9A3/NHE3, and the Na(+)/K(+) ATPase. This is Serine/threonine-protein kinase Sgk2 (Sgk2) from Rattus norvegicus (Rat).